A 726-amino-acid polypeptide reads, in one-letter code: MNPQQRIAAIGTDKELSDLLDFSAMFSPPVNSGKNRPTTLGSSQFTASGMDERTSQASWASGGQSSPSFESSRGFADSHYADHLSDSRLVSHEGLSPTPFMSSSIMGKSERPPFSGYGREPGVSGCQSNLRSDIQLASPGPVTTPGKSPTPFYSYTGPNPRRRPLQDSASMDPLQTKKVRKPPPGLPTSVYAPSPSSEDFNRDSPSYPSPKPPGSMFASTFFDGTHNSSDQWNLSNGISQPGYGGMLGGSSSHMPQSGNYSNLHSHDRLNYPPHSVSPTDINASLPPMSSFHRSSASTSPFVTASHTPPVNTTEGVMAAANRGNATGSSQTGDALGKALASIYSPDHTSSSFPSNPSTPVGSPSPLAVQAGAATAGTVVTASGPAGRAGTTQWTRATGQAPSSPSYENSLHSLKNRVHQQLHEHLQDAMSFLKDVCESRMEDRLDRLDDAIHVLRNHAVGSTAALSNDIHSLLGQAHNGPISAIGSSFPSSGLVTNRTAQMGSVHREESGSLNNNNHSALQASAAPTSSSELNHQADAFRAIAGVLASQVASPLGLKVENQDKDDMHDSHASDDLKSDDESDKRDMKQNRGSSRPSCELSCSSINEDEDLNPEQKAERERERRMANNARERLRVRDINEAFKELGRMCQLHLKSEKPQTKLLILHQAVAVILSLEQQVRERNLNPKAACLKRREEEKVSGVSGDPQQAHPAVHPGLTDTSNPMGHL.

Disordered regions lie at residues 27-75 (SPPV…SRGF), 89-223 (LVSH…TFFD), 243-267 (YGGM…HSHD), 289-309 (SSFH…HTPP), 345-367 (PDHT…SPLA), 380-409 (TASG…YENS), 501-532 (MGSV…SSEL), 558-624 (VENQ…ERRM), and 694-726 (EEEK…MGHL). Residues 29-47 (PVNSGKNRPTTLGSSQFTA) show a composition bias toward polar residues. Residues 55–74 (SQASWASGGQSSPSFESSRG) show a composition bias toward low complexity. 3 stretches are compositionally biased toward polar residues: residues 145-157 (PGKS…SYTG), 249-263 (GSSS…YSNL), and 291-309 (FHRS…HTPP). The segment covering 348 to 359 (TSSSFPSNPSTP) has biased composition (low complexity). 2 stretches are compositionally biased toward polar residues: residues 389–409 (GTTQ…YENS) and 510–532 (GSLN…SSEL). Positions 559–575 (ENQDKDDMHDSHASDDL) are enriched in basic and acidic residues. The segment covering 592–603 (SSRPSCELSCSS) has biased composition (low complexity). The span at 612 to 624 (PEQKAERERERRM) shows a compositional bias: basic and acidic residues. One can recognise a bHLH domain in the interval 621–674 (ERRMANNARERLRVRDINEAFKELGRMCQLHLKSEKPQTKLLILHQAVAVILSL). Residues 676 to 699 (QQVRERNLNPKAACLKRREEEKVS) form a class A specific domain region. Polar residues predominate over residues 717–726 (TDTSNPMGHL).

As to quaternary structure, efficient DNA binding requires dimerization with another bHLH protein.

It is found in the nucleus. Functionally, transcriptional regulator. Involved in the initiation of neuronal differentiation. Activates transcription by binding to the E box (5'-CANNTG-3'). May be involved in the functional network that regulates the development of the GnRH axis. The polypeptide is Transcription factor 12 (tcf12) (Danio rerio (Zebrafish)).